The primary structure comprises 260 residues: 3-methyl-2-oxobutanoate hydroxymethyltransferase (260 aa).

Positions 44 and 83 each coordinate Mg(2+). Residues 44 to 45 (DS), Asp83, and Lys113 contribute to the 3-methyl-2-oxobutanoate site. Glu115 serves as a coordination point for Mg(2+). Residue Glu182 is the Proton acceptor of the active site.

The protein belongs to the PanB family. In terms of assembly, homodecamer; pentamer of dimers. Requires Mg(2+) as cofactor.

It localises to the cytoplasm. It carries out the reaction 3-methyl-2-oxobutanoate + (6R)-5,10-methylene-5,6,7,8-tetrahydrofolate + H2O = 2-dehydropantoate + (6S)-5,6,7,8-tetrahydrofolate. The protein operates within cofactor biosynthesis; (R)-pantothenate biosynthesis; (R)-pantoate from 3-methyl-2-oxobutanoate: step 1/2. Its function is as follows. Catalyzes the reversible reaction in which hydroxymethyl group from 5,10-methylenetetrahydrofolate is transferred onto alpha-ketoisovalerate to form ketopantoate. The sequence is that of 3-methyl-2-oxobutanoate hydroxymethyltransferase from Synechocystis sp. (strain ATCC 27184 / PCC 6803 / Kazusa).